We begin with the raw amino-acid sequence, 612 residues long: UvrABC system protein C (612 aa).

Residues 20–98 (THSGVYRMLD…IKQHRPKYNI (79 aa)) form the GIY-YIG domain. The UVR domain occupies 208–243 (STVLEEISAKMYQASEDMEYEKAQVYRDQLVVLRKL).

The protein belongs to the UvrC family. In terms of assembly, interacts with UvrB in an incision complex.

The protein resides in the cytoplasm. In terms of biological role, the UvrABC repair system catalyzes the recognition and processing of DNA lesions. UvrC both incises the 5' and 3' sides of the lesion. The N-terminal half is responsible for the 3' incision and the C-terminal half is responsible for the 5' incision. This is UvrABC system protein C from Francisella tularensis subsp. novicida (strain U112).